A 218-amino-acid polypeptide reads, in one-letter code: uncharacterized protein (218 aa).

A run of 5 helical transmembrane segments spans residues 27-49 (IALE…GFLA), 57-77 (GGVL…GYWV), 115-135 (VFFG…AGIV), 142-162 (FLLY…SLAY), and 180-200 (FSWF…VFHF).

It belongs to the DedA family.

The protein localises to the cell membrane. This is an uncharacterized protein from Synechocystis sp. (strain ATCC 27184 / PCC 6803 / Kazusa).